Reading from the N-terminus, the 68-residue chain is Large ribosomal subunit protein bL31 (68 aa).

Cys16, Cys18, Cys36, and Cys39 together coordinate Zn(2+).

The protein belongs to the bacterial ribosomal protein bL31 family. Type A subfamily. In terms of assembly, part of the 50S ribosomal subunit. Requires Zn(2+) as cofactor.

In terms of biological role, binds the 23S rRNA. This chain is Large ribosomal subunit protein bL31, found in Dictyoglomus thermophilum (strain ATCC 35947 / DSM 3960 / H-6-12).